The chain runs to 138 residues: MSRKLARELTMKVLFEMHINNDFNIQRVEHHLFEGSIEEQQKEYIHKVLNEAILNLEAIDSIIEEYSTSWKLNRIANVDLAILRLAFSEIIYMKDIPYRVSINEAIELAKIYGSDETPNFVNGILGKYVEQEGLMLNE.

This sequence belongs to the NusB family.

In terms of biological role, involved in transcription antitermination. Required for transcription of ribosomal RNA (rRNA) genes. Binds specifically to the boxA antiterminator sequence of the ribosomal RNA (rrn) operons. The protein is Transcription antitermination protein NusB of Alkaliphilus oremlandii (strain OhILAs) (Clostridium oremlandii (strain OhILAs)).